A 196-amino-acid polypeptide reads, in one-letter code: ATP-dependent Clp protease proteolytic subunit 1 (196 aa).

S96 (nucleophile) is an active-site residue. H121 is a catalytic residue.

The protein belongs to the peptidase S14 family. As to quaternary structure, fourteen ClpP subunits assemble into 2 heptameric rings which stack back to back to give a disk-like structure with a central cavity, resembling the structure of eukaryotic proteasomes.

The protein localises to the cytoplasm. It carries out the reaction Hydrolysis of proteins to small peptides in the presence of ATP and magnesium. alpha-casein is the usual test substrate. In the absence of ATP, only oligopeptides shorter than five residues are hydrolyzed (such as succinyl-Leu-Tyr-|-NHMec, and Leu-Tyr-Leu-|-Tyr-Trp, in which cleavage of the -Tyr-|-Leu- and -Tyr-|-Trp bonds also occurs).. Functionally, cleaves peptides in various proteins in a process that requires ATP hydrolysis. Has a chymotrypsin-like activity. Plays a major role in the degradation of misfolded proteins. The protein is ATP-dependent Clp protease proteolytic subunit 1 of Prochlorococcus marinus subsp. pastoris (strain CCMP1986 / NIES-2087 / MED4).